The primary structure comprises 86 residues: Large ribosomal subunit protein eL20 (86 aa).

The protein belongs to the eukaryotic ribosomal protein eL20 family. As to quaternary structure, part of the 50S ribosomal subunit. Binds 23S rRNA.

This chain is Large ribosomal subunit protein eL20, found in Sulfolobus acidocaldarius (strain ATCC 33909 / DSM 639 / JCM 8929 / NBRC 15157 / NCIMB 11770).